The chain runs to 438 residues: Ribosomal protein uS12 methylthiotransferase RimO (438 aa).

Residues 1-115 enclose the MTTase N-terminal domain; that stretch reads MKYFILSLGC…LDKLLADLGE (115 aa). [4Fe-4S] cluster contacts are provided by C10, C46, C78, C150, C154, and C157. Positions 136-366 constitute a Radical SAM core domain; the sequence is KSNEVYRYIK…MEVQQEISLN (231 aa). Positions 369 to 437 constitute a TRAM domain; the sequence is KALVGKKIPV…IYDLKGEFIN (69 aa).

Belongs to the methylthiotransferase family. RimO subfamily. [4Fe-4S] cluster serves as cofactor.

The protein localises to the cytoplasm. The enzyme catalyses L-aspartate(89)-[ribosomal protein uS12]-hydrogen + (sulfur carrier)-SH + AH2 + 2 S-adenosyl-L-methionine = 3-methylsulfanyl-L-aspartate(89)-[ribosomal protein uS12]-hydrogen + (sulfur carrier)-H + 5'-deoxyadenosine + L-methionine + A + S-adenosyl-L-homocysteine + 2 H(+). Functionally, catalyzes the methylthiolation of an aspartic acid residue of ribosomal protein uS12. The chain is Ribosomal protein uS12 methylthiotransferase RimO from Carboxydothermus hydrogenoformans (strain ATCC BAA-161 / DSM 6008 / Z-2901).